The chain runs to 1036 residues: Multiple C2 domain and transmembrane region protein 2 (1036 aa).

The C2 1 domain maps to 1–110; the sequence is MRNTTKLVVH…YKDDQVYQRF (110 aa). 2 disordered regions span residues 137 to 204 and 225 to 246; these read DQTF…PVQK and RENPHEAQKPMSRGANQLHPQN. Positions 146-155 are enriched in polar residues; sequence PYTSPTQASA. Residues 158–168 are compositionally biased toward acidic residues; it reads TEEDTADSETE. Basic and acidic residues predominate over residues 190-204; that stretch reads VEGKKSEEVKEPVQK. C2 domains follow at residues 277 to 399, 440 to 563, and 607 to 734; these read PNAG…PQWY, VHGE…SRWF, and YISD…THSF. Positions 316, 364, 366, and 372 each coordinate Ca(2+). The next 2 helical transmembrane spans lie at 871 to 891 and 979 to 999; these read FILVMYPELILPTMFLYMFFI and LFILFCLAASVVLYAMPFKAI.

Belongs to the MCTP family. It depends on Ca(2+) as a cofactor. Expressed in the vascular tissues of roots and rosette leaves. Accumulates in roots meristems. Observed in flowers.

The protein resides in the cell membrane. Its function is as follows. May function as a signaling molecule by regulating the trafficking of other regulators. The polypeptide is Multiple C2 domain and transmembrane region protein 2 (Arabidopsis thaliana (Mouse-ear cress)).